The primary structure comprises 233 residues: Adenosylcobinamide-GDP ribazoletransferase (233 aa).

Helical transmembrane passes span 24 to 44, 46 to 66, 96 to 116, 117 to 137, 158 to 178, 181 to 198, and 209 to 229; these read LWALPLLAPLTSALATLVLYL, LPLSNVLAILALYFTTGLLHL, IAGVFAVVMVFLLQVYSLPLL, PFYALYLAELNSKFAMLLALA, QLTLGTALYLLLLLPVAYIEP, ISSLLGLLAGAYVIRLSL, and IGAVAEITRAGALLGMAVVWV.

It belongs to the CobS family. Requires Mg(2+) as cofactor.

It is found in the cell membrane. It catalyses the reaction alpha-ribazole + adenosylcob(III)inamide-GDP = adenosylcob(III)alamin + GMP + H(+). It carries out the reaction alpha-ribazole 5'-phosphate + adenosylcob(III)inamide-GDP = adenosylcob(III)alamin 5'-phosphate + GMP + H(+). It functions in the pathway cofactor biosynthesis; adenosylcobalamin biosynthesis; adenosylcobalamin from cob(II)yrinate a,c-diamide: step 7/7. Joins adenosylcobinamide-GDP and alpha-ribazole to generate adenosylcobalamin (Ado-cobalamin). Also synthesizes adenosylcobalamin 5'-phosphate from adenosylcobinamide-GDP and alpha-ribazole 5'-phosphate. The chain is Adenosylcobinamide-GDP ribazoletransferase from Thermococcus gammatolerans (strain DSM 15229 / JCM 11827 / EJ3).